A 508-amino-acid chain; its full sequence is UBX domain-containing protein 4 (508 aa).

Residues 1 to 200 form an interaction with UBQLN1 region; it reads MLWFQGAIPA…PAEDLNIRVE (200 aa). The Cytoplasmic portion of the chain corresponds to 1-413; it reads MLWFQGAIPA…VHSSSGDIWT (413 aa). Composition is skewed to polar residues over residues 117–151 and 160–187; these read SETSVANGSQSESSVSTPSASFEPNNTCENSQSRN and TSDTKSDTATGGESAGHATSSQEPSGCS. The disordered stretch occupies residues 117–196; that stretch reads SETSVANGSQ…SDQRPAEDLN (80 aa). One can recognise a UBX domain in the interval 315–393; that stretch reads ERSTVARIQF…ELAPSASVVL (79 aa). The stretch at 414–434 is an intramembrane region; that stretch reads LLGTVLYPFLAIWRLISNFLF. Topologically, residues 435-508 are cytoplasmic; sequence SNPPPTQTSV…TWNGNSTQQM (74 aa). Residues 440–508 form a disordered region; sequence TQTSVRVTSS…TWNGNSTQQM (69 aa). The span at 441 to 458 shows a compositional bias: polar residues; sequence QTSVRVTSSEPPNPASSS. A compositionally biased stretch (basic and acidic residues) spans 459 to 491; that stretch reads KSEKREPVRKRVLEKRGDDFKKEGKIYRLRTQD. T489 carries the phosphothreonine modification. Positions 498–508 are enriched in polar residues; that stretch reads NTWNGNSTQQM.

As to quaternary structure, directly interacts with VCP. Interacts with UBQLN1. Forms a complex with VCP and UBQLN1. In terms of tissue distribution, expressed in many tissues, including heart, brain, placenta, lung, liver, skeletal muscle, kidney and pancreas. Accumulates in Alzheimer disease-afflicted brains (at protein level).

The protein localises to the endoplasmic reticulum membrane. Its subcellular location is the nucleus envelope. Its function is as follows. Involved in endoplasmic reticulum-associated protein degradation (ERAD). Acts as a platform to recruit both UBQLN1 and VCP to the ER during ERAD. The sequence is that of UBX domain-containing protein 4 (UBXN4) from Homo sapiens (Human).